We begin with the raw amino-acid sequence, 670 residues long: MRICHSRTLSNLKDLPITSRRAMHSAIVNYSTQKAQFPVETNNGEHYWAEKPNKFYQNKRPNFQGITFAKQQDLPSLPVPELKSTLDKYLQTIRPFCNDVETFERQQLLCKDFSEHMGPILQDRLKEYANDKRNWMAKFWDEQSYLQYNDPIVPYVSYFYSHMPLPNHLSKIDNDPLIKATAIISTVVKFIEAIKDESLPVEIIKGMPFCMNSFSLMFNTSRLPGKPEDNQDTNIFYSVYENNFVTIAYKGKFYKLMTHDGNDKPLSENEIWRQLYSVVFQGSQSDPKLGGIGSLTSLPRDQWREVHLELMKDPISQDSLETIHKSSFMLCLDLDQSPVTLEEKSRNCWHGDGINRFYDKSLQFLVTGNGSSGFLAEHSKMDGTPTLFLNNYVCQQLNKLDVDDFMRKVITPSSTVAMKPMELPFIITPKIHKAIESAQLQFKETIGEHDLRVWHYNKYGKTFIKRHGMSPDAFIQQVIQLAVFKYLKRQLPTYEAASTRKYFKGRTETGRSVSTASLEFVSKWQNGDVPIAEKIQALKHSAKEHSTYLKNAANGNGVDRHFFGLKNMLKSNDDQIPPLFKDPLFNYSSTWLISTSQLSSEYFDGYGWSQVNDNGFGLAYMLNNEWLHINIVNKPAKSGASVNRLHYYLSQAADEIFDALENENKRKAKL.

The active-site Proton acceptor is histidine 378. CoA contacts are provided by residues lysine 461 and 465–472; that span reads KRHGMSPD. Position 494 (tyrosine 494) interacts with (R)-carnitine. Serine 498 serves as a coordination point for CoA. Residue threonine 507 coordinates (R)-carnitine. Position 597 (glutamine 597) interacts with CoA. Residues 668–670 carry the Microbody targeting signal motif; that stretch reads AKL.

Belongs to the carnitine/choline acetyltransferase family.

The protein localises to the mitochondrion inner membrane. It is found in the peroxisome. It catalyses the reaction (R)-carnitine + acetyl-CoA = O-acetyl-(R)-carnitine + CoA. In terms of biological role, carnitine acetylase is specific for short chain fatty acids. Carnitine acetylase seems to affect the flux through the pyruvate dehydrogenase complex. It may be involved as well in the transport of acetyl-CoA into mitochondria. In Saccharomyces cerevisiae (strain ATCC 204508 / S288c) (Baker's yeast), this protein is Carnitine O-acetyltransferase, mitochondrial (CAT2).